Consider the following 358-residue polypeptide: Flap endonuclease 1 (358 aa).

The tract at residues 1-103 is N-domain; sequence MGIKRLSKLI…HEFEKRTKRR (103 aa). Mg(2+) is bound at residue Asp-34. Positions 47 and 69 each coordinate DNA. Residues Asp-85, Glu-157, Glu-159, Asp-178, and Asp-180 each coordinate Mg(2+). The tract at residues 121-252 is I-domain; it reads LVSKYDRMNV…KRAFEYIKKY (132 aa). Glu-157 contacts DNA. Positions 230 and 232 each coordinate DNA. Asp-232 is a binding site for Mg(2+). The interaction with PCNA stretch occupies residues 346–354; sequence KQTRIDSFF.

Belongs to the XPG/RAD2 endonuclease family. FEN1 subfamily. Interacts with PCNA. Three molecules of FEN1 bind to one PCNA trimer with each molecule binding to one PCNA monomer. PCNA stimulates the nuclease activity without altering cleavage specificity. Mg(2+) is required as a cofactor. Phosphorylated. Phosphorylation upon DNA damage induces relocalization to the nuclear plasma.

The protein resides in the nucleus. It is found in the nucleolus. The protein localises to the nucleoplasm. It localises to the mitochondrion. Functionally, structure-specific nuclease with 5'-flap endonuclease and 5'-3' exonuclease activities involved in DNA replication and repair. During DNA replication, cleaves the 5'-overhanging flap structure that is generated by displacement synthesis when DNA polymerase encounters the 5'-end of a downstream Okazaki fragment. It enters the flap from the 5'-end and then tracks to cleave the flap base, leaving a nick for ligation. Also involved in the long patch base excision repair (LP-BER) pathway, by cleaving within the apurinic/apyrimidinic (AP) site-terminated flap. Acts as a genome stabilization factor that prevents flaps from equilibrating into structures that lead to duplications and deletions. Also possesses 5'-3' exonuclease activity on nicked or gapped double-stranded DNA, and exhibits RNase H activity. Also involved in replication and repair of rDNA and in repairing mitochondrial DNA. The protein is Flap endonuclease 1 of Enterocytozoon bieneusi (strain H348) (Microsporidian parasite).